We begin with the raw amino-acid sequence, 379 residues long: Stimulator of interferon genes protein (379 aa).

The next 2 membrane-spanning stretches (helical) occupy residues 18–38 and 43–63; these read AKKA…DLGE and ILQW…FKGV. S-palmitoyl cysteine attachment occurs at residues C88 and C91. 2 helical membrane passes run 89–109 and 114–134; these read LGCP…YTPF and HLPF…SILL. A cyclic dinucleotide-binding domain (CBD) region spans residues 153-340; sequence LNVAQGMAWS…RHLKQEEKEE (188 aa). 2',3'-cGAMP contacts are provided by S162, Y167, R238, and T263. 3',3'-c-di-GMP contacts are provided by residues S162, Y167, 238 to 241, and T263; that span reads RVYT. Positions 167, 238, and 263 each coordinate 2',3'-cUAMP. The interval 338–363 is disordered; sequence KEEVTVDSARTSVMPDPSMLPQGPEL. Positions 340–379 are C-terminal tail (CTT); that stretch reads EVTVDSARTSVMPDPSMLPQGPELLISSMDQPLPLRTDVF. Residue S355 is modified to Phosphoserine. Positions 363–366 match the pLxIS motif motif; sequence LLIS. The residue at position 366 (S366) is a Phosphoserine; by TBK1.

Belongs to the STING family. Homodimer; forms a homodimer in absence of cyclic nucleotide (c-di-GMP or cGAMP). Homotetramer; in presence of cyclic nucleotide (c-di-GMP or cGAMP), forms tetramers and higher-order oligomers through side-by-side packing. Interacts (when phosphorylated) with IRF3; following activation and phosphorylation on the pLxIS motif by TBK1, recruits IRF3. Interacts with TBK1; when homodimer, leading to subsequent production of IFN-beta. Interacts (via transmembrane domain) with TMEM203. In terms of processing, phosphorylation by TBK1 leads to activation and production of IFN-beta. Following cyclic nucleotide (c-di-GMP or cGAMP)-binding, activation and translocation from the endoplasmic reticulum, STING1 is phosphorylated by TBK1 at Ser-366 in the pLxIS motif. The phosphorylated pLxIS motif constitutes an IRF3-binding motif, leading to recruitment of the transcription factor IRF3 to induce type-I interferons and other cytokines. In contrast, lacks phosphorylation site at position 358, leading to reduced production of type-I interferons and other cytokines.

It localises to the endoplasmic reticulum membrane. The protein localises to the cytoplasm. The protein resides in the perinuclear region. Its subcellular location is the endoplasmic reticulum-Golgi intermediate compartment membrane. It is found in the golgi apparatus membrane. It localises to the cytoplasmic vesicle. The protein localises to the autophagosome membrane. The protein resides in the mitochondrion outer membrane. Its subcellular location is the cell membrane. It catalyses the reaction H(+)(in) = H(+)(out). Functionally, facilitator of innate immune signaling that acts as a sensor of cytosolic DNA from bacteria and viruses and promotes low production of type I interferon (IFN-alpha and IFN-beta). Compared to other mammals, STING1-dependent type I interferon induction is strongly reduced in bats, suggesting that the cGAS-STING pathway promotes a limited inflammatory response. Innate immune response is triggered in response to non-CpG double-stranded DNA from viruses and bacteria delivered to the cytoplasm. Acts by binding cyclic dinucleotides: recognizes and binds cyclic di-GMP (c-di-GMP), a second messenger produced by bacteria, cyclic UMP-AMP (2',3'-cUAMP), and cyclic GMP-AMP (cGAMP), a messenger produced by CGAS in response to DNA virus in the cytosol. Upon binding to c-di-GMP, cUAMP or cGAMP, STING1 oligomerizes, translocates from the endoplasmic reticulum and is phosphorylated by TBK1 on the pLxIS motif, leading to recruitment and subsequent activation of the transcription factor IRF3 to induce expression of type I interferon and exert a potent anti-viral state. In addition to promote the production of type I interferons, plays a direct role in autophagy. Following cGAMP-binding, STING1 buds from the endoplasmic reticulum into COPII vesicles, which then form the endoplasmic reticulum-Golgi intermediate compartment (ERGIC). The ERGIC serves as the membrane source for WIPI2 recruitment and LC3 lipidation, leading to formation of autophagosomes that target cytosolic DNA or DNA viruses for degradation by the lysosome. Promotes autophagy by acting as a proton channel that directs proton efflux from the Golgi to facilitate MAP1LC3B/LC3B lipidation. The autophagy- and interferon-inducing activities can be uncoupled and autophagy induction is independent of TBK1 phosphorylation. This chain is Stimulator of interferon genes protein, found in Pteronotus parnellii (Parnell's mustached bat).